The chain runs to 122 residues: Large ribosomal subunit protein uL14 (122 aa).

It belongs to the universal ribosomal protein uL14 family. Part of the 50S ribosomal subunit. Forms a cluster with proteins L3 and L19. In the 70S ribosome, L14 and L19 interact and together make contacts with the 16S rRNA in bridges B5 and B8.

Its function is as follows. Binds to 23S rRNA. Forms part of two intersubunit bridges in the 70S ribosome. The protein is Large ribosomal subunit protein uL14 of Caldicellulosiruptor bescii (strain ATCC BAA-1888 / DSM 6725 / KCTC 15123 / Z-1320) (Anaerocellum thermophilum).